A 153-amino-acid polypeptide reads, in one-letter code: Cytochrome c-type biogenesis protein CcmE (153 aa).

Over 1–6 (MNARRR) the chain is Cytoplasmic. Residues 7–27 (LWSVLMLILAVGTAATLTIMA) form a helical; Signal-anchor for type II membrane protein membrane-spanning segment. The Periplasmic portion of the chain corresponds to 28–153 (LRHNLTYLYM…LDTPIAETTP (126 aa)). Residues His-121 and Tyr-125 each coordinate heme. Over residues 131-141 (ANKMQPTPTQH) the composition is skewed to polar residues. A disordered region spans residues 131-153 (ANKMQPTPTQHTHLDTPIAETTP).

This sequence belongs to the CcmE/CycJ family.

It is found in the cell inner membrane. Functionally, heme chaperone required for the biogenesis of c-type cytochromes. Transiently binds heme delivered by CcmC and transfers the heme to apo-cytochromes in a process facilitated by CcmF and CcmH. The chain is Cytochrome c-type biogenesis protein CcmE from Xylella fastidiosa (strain Temecula1 / ATCC 700964).